Here is a 152-residue protein sequence, read N- to C-terminus: Avidin (152 aa).

The N-terminal stretch at 1–24 is a signal peptide; sequence MVHATSPLLLLLLLSLALVAPGLS. One can recognise an Avidin-like domain in the interval 26 to 149; the sequence is RKCSLTGKWT…GINIFTRLRT (124 aa). An intrachain disulfide couples C28 to C107. The N-linked (GlcNAc...) asparagine glycan is linked to N41. Y57 is a biotin binding site.

The protein belongs to the avidin/streptavidin family. Homotetramer. Post-translationally, N-linked glycan at Asn-41 consists of GlcNAc(beta1-2)Man(alpha1-3)[GlcNAc(beta1-4)][Man(alpha1-?)Man(alpha1-6)] Man(beta1-4)GlcNAc(beta1-4)GlcNAc. In terms of tissue distribution, synthesized in hen oviduct and concentrated in egg white (where it represents 0.05% of the total protein).

It localises to the secreted. Functionally, the biological function of avidin is not known. Forms a strong non-covalent specific complex with biotin (one molecule of biotin per subunit of avidin). The protein is Avidin (AVD) of Gallus gallus (Chicken).